The chain runs to 581 residues: Proline--tRNA ligase (581 aa).

The protein belongs to the class-II aminoacyl-tRNA synthetase family. ProS type 1 subfamily. As to quaternary structure, homodimer.

Its subcellular location is the cytoplasm. It catalyses the reaction tRNA(Pro) + L-proline + ATP = L-prolyl-tRNA(Pro) + AMP + diphosphate. In terms of biological role, catalyzes the attachment of proline to tRNA(Pro) in a two-step reaction: proline is first activated by ATP to form Pro-AMP and then transferred to the acceptor end of tRNA(Pro). As ProRS can inadvertently accommodate and process non-cognate amino acids such as alanine and cysteine, to avoid such errors it has two additional distinct editing activities against alanine. One activity is designated as 'pretransfer' editing and involves the tRNA(Pro)-independent hydrolysis of activated Ala-AMP. The other activity is designated 'posttransfer' editing and involves deacylation of mischarged Ala-tRNA(Pro). The misacylated Cys-tRNA(Pro) is not edited by ProRS. This Delftia acidovorans (strain DSM 14801 / SPH-1) protein is Proline--tRNA ligase.